Reading from the N-terminus, the 201-residue chain is MSHDANTIDSRTHEGELNKLGFWIFLTAEFALFGTLFATLLTLQHGGGYGGKLTTDLFELHLILIMTFALLISSYTCGIAIYYMRQEKQNLMMFWMIITVILGLVFVGFEIYEFAHYASEGVNPTIGSFWSSFFILLGTHGAHVSLGIVWVICLLIQIGTRGLDSYNAPKLFIVSLYWHFLDVVWVFIFTAVYMIGMVYSG.

Helical transmembrane passes span 20–40 (LGFW…FATL), 62–82 (LILI…IAIY), 91–111 (LMMF…GFEI), 133–153 (FFIL…WVIC), and 172–192 (FIVS…FTAV).

It belongs to the cytochrome c oxidase subunit 3 family.

It localises to the cell membrane. The catalysed reaction is 2 a quinol + O2 = 2 a quinone + 2 H2O. In terms of biological role, catalyzes quinol oxidation with the concomitant reduction of oxygen to water. This is Probable quinol oxidase subunit 3 (qoxC) from Staphylococcus epidermidis (strain ATCC 35984 / DSM 28319 / BCRC 17069 / CCUG 31568 / BM 3577 / RP62A).